The chain runs to 380 residues: Ceramide synthase 2 (380 aa).

At 1 to 40 (MLQTLHDYFWWERLWLPVNLTWADLEDRDGRVYAKASDLY) the chain is on the lumenal side. A glycan (N-linked (GlcNAc...) asparagine) is linked at Asn-19. The helical transmembrane segment at 41–61 (ITLPLALLFLIIRYFFELYVA) threads the bilayer. The tract at residues 67 to 128 (LLNVKEKTRL…RRRRNQDRPS (62 aa)) is homeobox-like. One can recognise a TLC domain in the interval 131 to 332 (KKFREASWRF…ILRMAHKFIT (202 aa)). 4 helical membrane-spanning segments follow: residues 140–160 (FTFY…KPWF), 181–201 (WYYM…ASDV), 209–229 (QIIH…ANYV), and 264–284 (IFIV…PFWI). Residues 291-300 (YPLELYPAFF) carry the Last loop motif motif. A helical membrane pass occupies residues 304 to 324 (FFNFMMGVLQLLHIFWAYLIL). Residues 325–380 (RMAHKFITGKVVEDERSDREETESSEGEEAAAGGGAKNRPLANGHPILNNNHRKND) lie on the Cytoplasmic side of the membrane. Positions 338-380 (DERSDREETESSEGEEAAAGGGAKNRPLANGHPILNNNHRKND) are disordered. Ser-341 bears the Phosphoserine mark. Residues 344–353 (EETESSEGEE) show a composition bias toward acidic residues. Thr-346 carries the phosphothreonine modification. Residues Ser-348 and Ser-349 each carry the phosphoserine modification.

As to quaternary structure, interacts with ATP6V0C, ASGR1, ASGR2 and SLC22A1/OCT1. Interacts with ELOV1, HSD17B12 and TECR. Interacts with NDUFS2. Acetylated. Deacetylation by SIRT3 increases enzyme activity and promotes mitochondrial ceramide accumulation. Post-translationally, phosphorylated at the C-terminus by CK2, leading to increase the ceramide synthase activity.

The protein resides in the endoplasmic reticulum membrane. The catalysed reaction is a very long-chain fatty acyl-CoA + a sphingoid base = an N-(very-long-chain fatty acyl)-sphingoid base + CoA + H(+). It carries out the reaction docosanoyl-CoA + sphinganine = N-docosanoylsphinganine + CoA + H(+). It catalyses the reaction tetracosanoyl-CoA + sphinganine = N-tetracosanoylsphinganine + CoA + H(+). The enzyme catalyses hexacosanoyl-CoA + sphinganine = N-hexacosanoylsphinganine + CoA + H(+). The catalysed reaction is (15Z)-tetracosenoyl-CoA + sphinganine = N-(15Z-tetracosenoyl)-sphinganine + CoA + H(+). It carries out the reaction 2-hydroxytetracosanoyl-CoA + sphinganine = N-(2-hydroxytetracosanoyl)-sphinganine + CoA + H(+). It catalyses the reaction 2-hydroxydocosanoyl-CoA + sphinganine = N-(2-hydroxydocosanoyl)-sphinganine + CoA + H(+). The enzyme catalyses 2-hydroxytetracosenoyl-CoA + sphinganine = N-(2-hydroxytetracosenoyl)-sphinganine + CoA + H(+). The catalysed reaction is tetracosenoyl-CoA + sphinganine = an N-tetracosenoylsphinganine + CoA + H(+). It carries out the reaction hexacosenoyl-CoA + sphinganine = N-hexacosenoylsphinganine + CoA + H(+). It catalyses the reaction tetracosanoyl-CoA + sphing-4-enine = N-tetracosanoyl-sphing-4-enine + CoA + H(+). The enzyme catalyses tetracosenoyl-CoA + sphing-4-enine = N-(tetracosenoyl)-sphing-4-enine + CoA + H(+). The catalysed reaction is heptadecasphing-4-enine + tetracosanoyl-CoA = N-tetracosanoyl-heptadecasphing-4-enine + CoA + H(+). It carries out the reaction a fatty acyl-CoA + sphing-4-enine = an N-acylsphing-4-enine + CoA + H(+). It catalyses the reaction sphing-4-enine + hexadecanoyl-CoA = N-hexadecanoylsphing-4-enine + CoA + H(+). The enzyme catalyses sphing-4-enine + octadecanoyl-CoA = N-octadecanoylsphing-4-enine + CoA + H(+). The catalysed reaction is eicosanoyl-CoA + sphing-4-enine = N-eicosanoyl-sphing-4-enine + CoA + H(+). It carries out the reaction sphinganine + hexadecanoyl-CoA = N-hexadecanoylsphinganine + CoA + H(+). It catalyses the reaction sphinganine + octadecanoyl-CoA = N-(octadecanoyl)-sphinganine + CoA + H(+). The enzyme catalyses sphinganine + (9Z)-octadecenoyl-CoA = N-(9Z-octadecenoyl)-sphinganine + CoA + H(+). The catalysed reaction is eicosanoyl-CoA + sphinganine = N-eicosanoylsphinganine + CoA + H(+). It functions in the pathway lipid metabolism; sphingolipid metabolism. Its activity is regulated as follows. Ceramide synthase activity is inhibited by sphingosine-1-phosphate. In terms of biological role, ceramide synthase that catalyzes the transfer of the acyl chain from acyl-CoA to a sphingoid base, with high selectivity toward very-long-chain fatty acyl-CoA (chain length C22-C27). N-acylates sphinganine and sphingosine bases to form dihydroceramides and ceramides in de novo synthesis and salvage pathways, respectively. Plays a non-redundant role in the synthesis of ceramides with very-long-chain fatty acids in kidney, liver and brain. Regulates the abundance of myelin-specific sphingolipids galactosylceramide and sulfatide that affects myelin sheath architecture and motor neuron functions. The polypeptide is Ceramide synthase 2 (Bos taurus (Bovine)).